A 549-amino-acid polypeptide reads, in one-letter code: Probable protein kinase UbiB (549 aa).

The region spanning 123-501 (DFDNTPLASA…QQKAHKSNYL (379 aa)) is the Protein kinase domain. ATP is bound by residues 129 to 137 (LASASISQV) and K152. The active-site Proton acceptor is the D287. 2 consecutive transmembrane segments (helical) span residues 498-518 (SNYLLITSAVLVICGTILFNQ) and 520-540 (ATLWASYGSITVGVVLWLLGW).

This sequence belongs to the ABC1 family. UbiB subfamily.

It localises to the cell inner membrane. The protein operates within cofactor biosynthesis; ubiquinone biosynthesis [regulation]. Its function is as follows. Is probably a protein kinase regulator of UbiI activity which is involved in aerobic coenzyme Q (ubiquinone) biosynthesis. The polypeptide is Probable protein kinase UbiB (Shewanella woodyi (strain ATCC 51908 / MS32)).